Reading from the N-terminus, the 127-residue chain is RutC family protein PYRAB12510 (127 aa).

This sequence belongs to the RutC family.

This Pyrococcus abyssi (strain GE5 / Orsay) protein is RutC family protein PYRAB12510.